The primary structure comprises 91 residues: MGSLKLSTFAIVVCLSILLISPIEVNGWGKCDLRKGLCRLADTISTCDVPCRAVDSKYHGGECLNVGGGQGICWCCRDYDAAKSGAEKESM.

Positions 1 to 27 are cleaved as a signal peptide; sequence MGSLKLSTFAIVVCLSILLISPIEVNG. Disulfide bonds link Cys31–Cys76, Cys38–Cys63, Cys47–Cys73, and Cys51–Cys75.

The protein belongs to the DEFL family.

It is found in the secreted. The chain is Defensin-like protein 95 from Arabidopsis thaliana (Mouse-ear cress).